Here is a 444-residue protein sequence, read N- to C-terminus: Argininosuccinate synthase (444 aa).

ATP is bound by residues 17-25 (AFSGGLDTS) and alanine 43. Residue tyrosine 99 participates in L-citrulline binding. The ATP site is built by glycine 129 and threonine 131. Residues threonine 131, asparagine 135, and aspartate 136 each coordinate L-aspartate. L-citrulline is bound at residue asparagine 135. Residue aspartate 136 participates in ATP binding. Residues arginine 139 and serine 192 each coordinate L-citrulline. Aspartate 194 serves as a coordination point for ATP. L-citrulline-binding residues include threonine 201, glutamate 203, and glutamate 280.

This sequence belongs to the argininosuccinate synthase family. Type 2 subfamily. In terms of assembly, homotetramer.

Its subcellular location is the cytoplasm. The enzyme catalyses L-citrulline + L-aspartate + ATP = 2-(N(omega)-L-arginino)succinate + AMP + diphosphate + H(+). It functions in the pathway amino-acid biosynthesis; L-arginine biosynthesis; L-arginine from L-ornithine and carbamoyl phosphate: step 2/3. This chain is Argininosuccinate synthase, found in Burkholderia lata (strain ATCC 17760 / DSM 23089 / LMG 22485 / NCIMB 9086 / R18194 / 383).